We begin with the raw amino-acid sequence, 752 residues long: Zinc finger BED domain-containing protein RICESLEEPER 3 (752 aa).

The BED-type zinc finger occupies 106–166; sequence RKKSVVWEHF…ASCPMLKNED (61 aa). 4 residues coordinate Zn(2+): C129, C132, H153, and C159. Positions 647-733 are HATC (Hobo-Ac-Tam3) domain; the sequence is ELEQYLEEAL…EALFCAKDWL (87 aa).

In terms of assembly, homodimer.

It localises to the nucleus. Functionally, transposase-like protein that is essential for plant growth and development. May regulate global gene expression by recruiting other cellular factors. In Oryza sativa subsp. japonica (Rice), this protein is Zinc finger BED domain-containing protein RICESLEEPER 3.